A 247-amino-acid polypeptide reads, in one-letter code: Carboxy-S-adenosyl-L-methionine synthase (247 aa).

S-adenosyl-L-methionine-binding positions include Tyr39, 64 to 66 (GCS), 89 to 90 (DN), 117 to 118 (DI), Asn132, and Arg199.

Belongs to the class I-like SAM-binding methyltransferase superfamily. Cx-SAM synthase family. In terms of assembly, homodimer.

It carries out the reaction prephenate + S-adenosyl-L-methionine = carboxy-S-adenosyl-L-methionine + 3-phenylpyruvate + H2O. Its function is as follows. Catalyzes the conversion of S-adenosyl-L-methionine (SAM) to carboxy-S-adenosyl-L-methionine (Cx-SAM). In Escherichia coli O7:K1 (strain IAI39 / ExPEC), this protein is Carboxy-S-adenosyl-L-methionine synthase.